We begin with the raw amino-acid sequence, 185 residues long: Casparian strip membrane protein 1 (185 aa).

At 1–32 the chain is on the cytoplasmic side; the sequence is MKAVSIEAGERSKAKRVHGVNRGISVFDLVLR. The helical transmembrane segment at 33-53 threads the bilayer; that stretch reads IVALVGTLASAVAMGTAGQAL. Over 54–73 the chain is Extracellular; it reads SFSTQIVNFEAQYDDIDAFK. The chain crosses the membrane as a helical span at residues 74–94; it reads FFVVSNSITCVYLALSIPISI. At 95–106 the chain is on the cytoplasmic side; it reads FHIIRSRAGKSR. A helical membrane pass occupies residues 107–127; that stretch reads VLLIVLDAIMLVFLTSGASAA. At 128 to 160 the chain is on the extracellular side; that stretch reads AAIVYLAHNGNTSTNWFSICQQYTDFCQRSAGS. The N-linked (GlcNAc...) asparagine glycan is linked to Asn138. The helical transmembrane segment at 161–181 threads the bilayer; it reads LIGSFGAMALMVLLIILSSIA. Topologically, residues 182-185 are cytoplasmic; the sequence is LSRR.

It belongs to the Casparian strip membrane proteins (CASP) family. In terms of assembly, homodimer and heterodimers.

The protein resides in the cell membrane. Functionally, regulates membrane-cell wall junctions and localized cell wall deposition. Required for establishment of the Casparian strip membrane domain (CSD) and the subsequent formation of Casparian strips, a cell wall modification of the root endodermis that determines an apoplastic barrier between the intraorganismal apoplasm and the extraorganismal apoplasm and prevents lateral diffusion. The polypeptide is Casparian strip membrane protein 1 (Solanum demissum (Wild potato)).